The chain runs to 380 residues: Queuine tRNA-ribosyltransferase (380 aa).

The active-site Proton acceptor is Asp-96. Residues 96–100 (DSGGF), Asp-150, Gln-193, and Gly-220 contribute to the substrate site. The interval 251–257 (GVGAPDS) is RNA binding. Asp-270 functions as the Nucleophile in the catalytic mechanism. An RNA binding; important for wobble base 34 recognition region spans residues 275–279 (TRIAR). Zn(2+) is bound by residues Cys-308, Cys-310, Cys-313, and His-339.

Belongs to the queuine tRNA-ribosyltransferase family. As to quaternary structure, homodimer. Within each dimer, one monomer is responsible for RNA recognition and catalysis, while the other monomer binds to the replacement base PreQ1. Zn(2+) serves as cofactor.

The catalysed reaction is 7-aminomethyl-7-carbaguanine + guanosine(34) in tRNA = 7-aminomethyl-7-carbaguanosine(34) in tRNA + guanine. The protein operates within tRNA modification; tRNA-queuosine biosynthesis. In terms of biological role, catalyzes the base-exchange of a guanine (G) residue with the queuine precursor 7-aminomethyl-7-deazaguanine (PreQ1) at position 34 (anticodon wobble position) in tRNAs with GU(N) anticodons (tRNA-Asp, -Asn, -His and -Tyr). Catalysis occurs through a double-displacement mechanism. The nucleophile active site attacks the C1' of nucleotide 34 to detach the guanine base from the RNA, forming a covalent enzyme-RNA intermediate. The proton acceptor active site deprotonates the incoming PreQ1, allowing a nucleophilic attack on the C1' of the ribose to form the product. After dissociation, two additional enzymatic reactions on the tRNA convert PreQ1 to queuine (Q), resulting in the hypermodified nucleoside queuosine (7-(((4,5-cis-dihydroxy-2-cyclopenten-1-yl)amino)methyl)-7-deazaguanosine). The sequence is that of Queuine tRNA-ribosyltransferase from Streptococcus mutans serotype c (strain ATCC 700610 / UA159).